The following is a 444-amino-acid chain: Putative methylesterase 15, chloroplastic (444 aa).

The segment covering Met1–Ser27 has biased composition (polar residues). 2 disordered regions span residues Met1 to Ser36 and Pro48 to Ile91. A chloroplast-targeting transit peptide spans Met1–Ser58. The span at Ser53 to Lys63 shows a compositional bias: low complexity. Residues Gly64–Gln80 are compositionally biased toward basic residues. Over residues His81–Leu90 the composition is skewed to basic and acidic residues. The AB hydrolase-1 domain maps to Phe188 to Glu312. Asp262 acts as the Acyl-ester intermediate in catalysis. Active-site charge relay system residues include Asp390 and His418.

It belongs to the AB hydrolase superfamily. Methylesterase family.

The protein localises to the plastid. It localises to the chloroplast. Functionally, putative methylesterase. This chain is Putative methylesterase 15, chloroplastic, found in Arabidopsis thaliana (Mouse-ear cress).